Consider the following 215-residue polypeptide: 3,4-dihydroxy-2-butanone 4-phosphate synthase (215 aa).

D-ribulose 5-phosphate-binding positions include 38 to 39 (RE), Asp-43, 151 to 155 (RRGHT), and Glu-175. Mg(2+) is bound at residue Glu-39. His-154 is a binding site for Mg(2+).

It belongs to the DHBP synthase family. As to quaternary structure, homodimer. Requires Mg(2+) as cofactor. The cofactor is Mn(2+).

The enzyme catalyses D-ribulose 5-phosphate = (2S)-2-hydroxy-3-oxobutyl phosphate + formate + H(+). The protein operates within cofactor biosynthesis; riboflavin biosynthesis; 2-hydroxy-3-oxobutyl phosphate from D-ribulose 5-phosphate: step 1/1. Its function is as follows. Catalyzes the conversion of D-ribulose 5-phosphate to formate and 3,4-dihydroxy-2-butanone 4-phosphate. This is 3,4-dihydroxy-2-butanone 4-phosphate synthase from Haemophilus influenzae (strain PittGG).